Consider the following 168-residue polypeptide: tRNA-splicing endonuclease (168 aa).

Catalysis depends on residues Tyr-107, His-114, and Lys-145.

This sequence belongs to the tRNA-intron endonuclease family. Archaeal short subfamily. In terms of assembly, homotetramer; although the tetramer contains four active sites, only two participate in the cleavage. Therefore, it should be considered as a dimer of dimers.

The catalysed reaction is pretRNA = a 3'-half-tRNA molecule with a 5'-OH end + a 5'-half-tRNA molecule with a 2',3'-cyclic phosphate end + an intron with a 2',3'-cyclic phosphate and a 5'-hydroxyl terminus.. In terms of biological role, endonuclease that removes tRNA introns. Cleaves pre-tRNA at the 5'- and 3'-splice sites to release the intron. The products are an intron and two tRNA half-molecules bearing 2',3' cyclic phosphate and 5'-OH termini. Recognizes a pseudosymmetric substrate in which 2 bulged loops of 3 bases are separated by a stem of 4 bp. This Thermococcus gammatolerans (strain DSM 15229 / JCM 11827 / EJ3) protein is tRNA-splicing endonuclease.